A 443-amino-acid chain; its full sequence is Tryptophan synthase beta chain 2, chloroplastic (443 aa).

A disordered region spans residues Pro1–Ala32. The N-terminal 45 residues, Pro1 to Leu45, are a transit peptide targeting the chloroplast. Low complexity predominate over residues Arg18–Ala32. Lys138 carries the N6-(pyridoxal phosphate)lysine modification.

The protein belongs to the TrpB family. In terms of assembly, tetramer of two alpha and two beta chains. It depends on pyridoxal 5'-phosphate as a cofactor.

It is found in the plastid. It localises to the chloroplast. The enzyme catalyses (1S,2R)-1-C-(indol-3-yl)glycerol 3-phosphate + L-serine = D-glyceraldehyde 3-phosphate + L-tryptophan + H2O. The protein operates within amino-acid biosynthesis; L-tryptophan biosynthesis; L-tryptophan from chorismate: step 5/5. In terms of biological role, the beta subunit is responsible for the synthesis of L-tryptophan from indole and L-serine. This chain is Tryptophan synthase beta chain 2, chloroplastic (TSB2), found in Zea mays (Maize).